The following is a 458-amino-acid chain: ATP synthase subunit beta (458 aa).

Glycine 148–threonine 155 contacts ATP.

Belongs to the ATPase alpha/beta chains family. In terms of assembly, F-type ATPases have 2 components, CF(1) - the catalytic core - and CF(0) - the membrane proton channel. CF(1) has five subunits: alpha(3), beta(3), gamma(1), delta(1), epsilon(1). CF(0) has three main subunits: a(1), b(2) and c(9-12). The alpha and beta chains form an alternating ring which encloses part of the gamma chain. CF(1) is attached to CF(0) by a central stalk formed by the gamma and epsilon chains, while a peripheral stalk is formed by the delta and b chains.

The protein resides in the cell inner membrane. The catalysed reaction is ATP + H2O + 4 H(+)(in) = ADP + phosphate + 5 H(+)(out). Its function is as follows. Produces ATP from ADP in the presence of a proton gradient across the membrane. The catalytic sites are hosted primarily by the beta subunits. The sequence is that of ATP synthase subunit beta from Shewanella woodyi (strain ATCC 51908 / MS32).